A 460-amino-acid chain; its full sequence is Endoglucanase C (460 aa).

The signal sequence occupies residues 1–32; sequence MIKGSSLKRFKSLVMAAIFSVSIISTAIASSA. Glu-99 (proton donor) is an active-site residue. Residue Asp-155 is the Nucleophile of the active site. In terms of domain architecture, Dockerin spans 400–460; the sequence is KPDLKGDVNN…FAQLKVKLLN (61 aa).

This sequence belongs to the glycosyl hydrolase 8 (cellulase D) family. Monomer. There are two forms of the cellulase. The shorter form lacks probably the C-terminal reiterated domains.

It catalyses the reaction Endohydrolysis of (1-&gt;4)-beta-D-glucosidic linkages in cellulose, lichenin and cereal beta-D-glucans.. Its pathway is glycan metabolism; cellulose degradation. In terms of biological role, the biological conversion of cellulose to glucose generally requires three types of hydrolytic enzymes: (1) Endoglucanases which cut internal beta-1,4-glucosidic bonds; (2) Exocellobiohydrolases that cut the disaccharide cellobiose from the non-reducing end of the cellulose polymer chain; (3) Beta-1,4-glucosidases which hydrolyze the cellobiose and other short cello-oligosaccharides to glucose. The protein is Endoglucanase C (celCCC) of Ruminiclostridium cellulolyticum (strain ATCC 35319 / DSM 5812 / JCM 6584 / H10) (Clostridium cellulolyticum).